Consider the following 224-residue polypeptide: Protein HLJ1 (224 aa).

Positions 18–87 (DKHEFYEILK…RSIYDRIGRD (70 aa)) constitute a J domain. The segment covering 84–93 (IGRDPDDRQM) has biased composition (basic and acidic residues). Residues 84–107 (IGRDPDDRQMPSRGAASGFRGSAG) form a disordered region. A Phosphoserine modification is found at Ser109. Positions 173-192 (NRGGSPFMRQQPRSRQQQQQ) are disordered. The span at 181–192 (RQQPRSRQQQQQ) shows a compositional bias: low complexity.

The chain is Protein HLJ1 (HLJ1) from Saccharomyces cerevisiae (strain ATCC 204508 / S288c) (Baker's yeast).